The following is a 554-amino-acid chain: Phenylalanine--tRNA ligase beta subunit (554 aa).

The region spanning 276 to 351 (LTPRYREISI…KNHGYEKFEG (76 aa)) is the B5 domain. 4 residues coordinate Mg(2+): Asp-329, Asp-335, Glu-338, and Glu-339.

This sequence belongs to the phenylalanyl-tRNA synthetase beta subunit family. Type 2 subfamily. In terms of assembly, tetramer of two alpha and two beta subunits. Requires Mg(2+) as cofactor.

The protein resides in the cytoplasm. It carries out the reaction tRNA(Phe) + L-phenylalanine + ATP = L-phenylalanyl-tRNA(Phe) + AMP + diphosphate + H(+). The sequence is that of Phenylalanine--tRNA ligase beta subunit from Methanococcus vannielii (strain ATCC 35089 / DSM 1224 / JCM 13029 / OCM 148 / SB).